The primary structure comprises 1370 residues: MAYSYTERKRIRKNFGSRDSVLEIPYLLQMQKDAYTAFLQADVHPKKRTAEGLQAAFEAAFPIISHNGFVEMKYLEYNLAKPAFDVRECQTRGLTFASAVRAKVQLFIYDRESSTSQNKVIKEVKEQEVYMGEVPLMTTKGSFIINGTERVIVSQLHRSPGVFFEHDKGKTHSSGKLLFSARIIPYRGSWLDFEFDPKDFLYFRVDRRRKMPVTILLKAIGLNHESILANFFVNDNFRLMDSGAQMEFVAERLRGEVARFDITDKSGKVIVAKEKRVTARHTRELEQSGTTHISVPEDFLLGRVVARNIVDTDTGEILAKANEELTEALIKKLRLAGVQDLPCIYTNELDQGAYISQTLRSDETVDEFAARVAIYRMMRPGEPPTEDAVQALFQRLFYNPDTYDLSRVGRMKFNAKMGRPESTGPMVLTNEDILAVVKILVDLRNGRGDVDDIDHLGNRRVRCVGELAENQYRTGLARIEKAVKERLGQAEQEPLMPHDLINSKPISAALKEFFGASQLSQFMDQTNPLSEITHKRRVSALGPGGLTRERAGFEVRDVHVTHYGRVCPIETPEGPNIGLINSLALYARLNDYGFIETPYRRVVDGKVTMEIDYLSAIEEGKFVIAQANAVLDKDGKLTGEMISAREAGETIFAGPERVQYMDVSPAQIVSVAASLVPFLEHDDANRALMGANMSRQAVPILRPEKPMVGTGIERVAAIDSGTVVTATRGGMVDYVDATRVVIRVNDDEAQAGEVGVDIYNLIKYQRSNQNTNIHQRPIVKKGDMLAKGDVIADGASTDLGELALGQNMLIGFMTWNGYNFEDSILISERVVADDRYTSIHIEELVVMARDTKLGCEEITRDIPNLSEQQLNRLDESGIIYVGAEVQPGDTLVGKVTPKGETTLTPEEKLLRAIFGEKASDVKDTSLRVDQGSQGTVIDVQVFTREGIVRDRRAQQIIDDELKRFRLDLNDQLRLVEADSFDRIEKLLVGKVANGGPQKLAKGTTIDKAYLTSVEKHHWFDIRPAEDDVAAQLESIKNSMEQTRHSFDLAFEEKRKKLTQGDELPAGVLKMVKVYLAVKRHLQPGDKMAGRHGNKGVVSKIVPVEDMPFMADGTPCDIVLNPLGVPSRMNIGQVLEVHLGWAAKGIGQRIGDMLQAEAKVAELRKFLDELYNGTGRKEDLAQLSDDEVLEMAGNLTSGVPFATPVFDGASEADIGAMLKLAYPEDAIRQKGLTPARTQAYLYDGRTGDPFERPTTIGYMHYLKLHHLVDDKMHARSTGPYSLVTQQPLGGKAQFGGQRFGEMEVWALEAYGAAYTLQEMLTVKSDDVQGRTKVYESIVKGEHSIEAGMPESFNVLVKEIRSLGIDIELERG.

The protein belongs to the RNA polymerase beta chain family. In terms of assembly, the RNAP catalytic core consists of 2 alpha, 1 beta, 1 beta' and 1 omega subunit. When a sigma factor is associated with the core the holoenzyme is formed, which can initiate transcription.

The enzyme catalyses RNA(n) + a ribonucleoside 5'-triphosphate = RNA(n+1) + diphosphate. Its function is as follows. DNA-dependent RNA polymerase catalyzes the transcription of DNA into RNA using the four ribonucleoside triphosphates as substrates. The protein is DNA-directed RNA polymerase subunit beta of Albidiferax ferrireducens (strain ATCC BAA-621 / DSM 15236 / T118) (Rhodoferax ferrireducens).